The chain runs to 392 residues: Cobalt-precorrin-5B C(1)-methyltransferase (392 aa).

The protein belongs to the CbiD family.

It catalyses the reaction Co-precorrin-5B + S-adenosyl-L-methionine = Co-precorrin-6A + S-adenosyl-L-homocysteine. It functions in the pathway cofactor biosynthesis; adenosylcobalamin biosynthesis; cob(II)yrinate a,c-diamide from sirohydrochlorin (anaerobic route): step 6/10. In terms of biological role, catalyzes the methylation of C-1 in cobalt-precorrin-5B to form cobalt-precorrin-6A. In Pelobacter propionicus (strain DSM 2379 / NBRC 103807 / OttBd1), this protein is Cobalt-precorrin-5B C(1)-methyltransferase.